Reading from the N-terminus, the 283-residue chain is Pyridoxal kinase PdxY (283 aa).

Ser-8 serves as a coordination point for substrate. ATP-binding residues include Asp-110 and Glu-147. Substrate is bound at residue Asp-219.

The protein belongs to the pyridoxine kinase family. PdxY subfamily. In terms of assembly, homodimer. Requires Mg(2+) as cofactor.

It catalyses the reaction pyridoxal + ATP = pyridoxal 5'-phosphate + ADP + H(+). It functions in the pathway cofactor metabolism; pyridoxal 5'-phosphate salvage; pyridoxal 5'-phosphate from pyridoxal: step 1/1. Functionally, pyridoxal kinase involved in the salvage pathway of pyridoxal 5'-phosphate (PLP). Catalyzes the phosphorylation of pyridoxal to PLP. In Corynebacterium diphtheriae (strain ATCC 700971 / NCTC 13129 / Biotype gravis), this protein is Pyridoxal kinase PdxY.